Reading from the N-terminus, the 38-residue chain is Photosystem II reaction center protein L (38 aa).

A helical membrane pass occupies residues 17–37 (SLFWGLLLIFVLAVLFSSYFF).

Belongs to the PsbL family. In terms of assembly, PSII is composed of 1 copy each of membrane proteins PsbA, PsbB, PsbC, PsbD, PsbE, PsbF, PsbH, PsbI, PsbJ, PsbK, PsbL, PsbM, PsbT, PsbY, PsbZ, Psb30/Ycf12, at least 3 peripheral proteins of the oxygen-evolving complex and a large number of cofactors. It forms dimeric complexes.

The protein localises to the plastid. It localises to the chloroplast thylakoid membrane. Its function is as follows. One of the components of the core complex of photosystem II (PSII). PSII is a light-driven water:plastoquinone oxidoreductase that uses light energy to abstract electrons from H(2)O, generating O(2) and a proton gradient subsequently used for ATP formation. It consists of a core antenna complex that captures photons, and an electron transfer chain that converts photonic excitation into a charge separation. This subunit is found at the monomer-monomer interface and is required for correct PSII assembly and/or dimerization. This Cyanidium caldarium (Red alga) protein is Photosystem II reaction center protein L.